Here is a 334-residue protein sequence, read N- to C-terminus: Ketol-acid reductoisomerase (NADP(+)) (334 aa).

A KARI N-terminal Rossmann domain is found at 1–181 (MTTVYYDQSV…GATRAGVLET (181 aa)). NADP(+) contacts are provided by residues 25-28 (YGSQ), arginine 48, serine 52, and 82-85 (DEIQ). Histidine 107 is a catalytic residue. Glycine 133 provides a ligand contact to NADP(+). Residues 182–327 (SFKEETETDL…RELRDMMPFI (146 aa)) form the KARI C-terminal knotted domain. Mg(2+) contacts are provided by aspartate 190, glutamate 194, glutamate 226, and glutamate 230. Residue serine 251 participates in substrate binding.

Belongs to the ketol-acid reductoisomerase family. It depends on Mg(2+) as a cofactor.

The catalysed reaction is (2R)-2,3-dihydroxy-3-methylbutanoate + NADP(+) = (2S)-2-acetolactate + NADPH + H(+). The enzyme catalyses (2R,3R)-2,3-dihydroxy-3-methylpentanoate + NADP(+) = (S)-2-ethyl-2-hydroxy-3-oxobutanoate + NADPH + H(+). It participates in amino-acid biosynthesis; L-isoleucine biosynthesis; L-isoleucine from 2-oxobutanoate: step 2/4. It functions in the pathway amino-acid biosynthesis; L-valine biosynthesis; L-valine from pyruvate: step 2/4. Functionally, involved in the biosynthesis of branched-chain amino acids (BCAA). Catalyzes an alkyl-migration followed by a ketol-acid reduction of (S)-2-acetolactate (S2AL) to yield (R)-2,3-dihydroxy-isovalerate. In the isomerase reaction, S2AL is rearranged via a Mg-dependent methyl migration to produce 3-hydroxy-3-methyl-2-ketobutyrate (HMKB). In the reductase reaction, this 2-ketoacid undergoes a metal-dependent reduction by NADPH to yield (R)-2,3-dihydroxy-isovalerate. The protein is Ketol-acid reductoisomerase (NADP(+)) of Staphylococcus saprophyticus subsp. saprophyticus (strain ATCC 15305 / DSM 20229 / NCIMB 8711 / NCTC 7292 / S-41).